The following is a 430-amino-acid chain: Adenylosuccinate synthetase (430 aa).

GTP contacts are provided by residues 13-19 (GDEGKGK) and 41-43 (GHT). D14 acts as the Proton acceptor in catalysis. D14 and G41 together coordinate Mg(2+). Residues 14–17 (DEGK), 39–42 (NAGH), T130, R144, Q225, T240, and R304 each bind IMP. H42 serves as the catalytic Proton donor. 300 to 306 (ASTGRPR) is a substrate binding site. Residues R306, 332 to 334 (KLD), and 414 to 416 (STG) contribute to the GTP site.

Belongs to the adenylosuccinate synthetase family. As to quaternary structure, homodimer. The cofactor is Mg(2+).

Its subcellular location is the cytoplasm. It catalyses the reaction IMP + L-aspartate + GTP = N(6)-(1,2-dicarboxyethyl)-AMP + GDP + phosphate + 2 H(+). The protein operates within purine metabolism; AMP biosynthesis via de novo pathway; AMP from IMP: step 1/2. Plays an important role in the de novo pathway of purine nucleotide biosynthesis. Catalyzes the first committed step in the biosynthesis of AMP from IMP. This chain is Adenylosuccinate synthetase, found in Xanthomonas oryzae pv. oryzae (strain MAFF 311018).